The sequence spans 209 residues: uncharacterized protein (209 aa).

Transmembrane regions (helical) follow at residues 10–32, 37–59, and 64–86; these read AVVIILTRFMEAIAIIISIYLAF, LRYVLATAGVFLLSVLINLTGLI, and FIYFSLASIFLSALILTALILYV.

It is found in the cell membrane. This is an uncharacterized protein from Aquifex aeolicus (strain VF5).